The sequence spans 764 residues: DNA replication regulator DPB11 (764 aa).

BRCT domains lie at 1–99 (MKPF…MTGS), 129–220 (TNIT…PYYL), and 322–418 (NSTL…DLWS). 2 disordered regions span residues 651–675 (ETDS…RQMP) and 710–764 (TEQP…ELDS). The span at 739-751 (QDKKRTASLEKPM) shows a compositional bias: basic and acidic residues.

In terms of assembly, interacts with SLD2.

The protein localises to the nucleus. In terms of biological role, has a role in the initiation of DNA replication. Required at S-phase checkpoint. Required for the association of PSF1 with origins. Also required for the proper activation of RAD53 in response to DNA damage and replication blocks. Multicopy suppressor of DPB2 mutation. Overexpression restores the growth defect conferred by POL2 mutation. This Saccharomyces cerevisiae (strain ATCC 204508 / S288c) (Baker's yeast) protein is DNA replication regulator DPB11 (DPB11).